The primary structure comprises 154 residues: Interleukin-2 (154 aa).

The first 20 residues, 1-20, serve as a signal peptide directing secretion; it reads MYKMQLLSCIALTLALVANG. An O-linked (GalNAc...) threonine glycan is attached at T23. C78 and C126 are oxidised to a cystine.

The protein belongs to the IL-2 family.

It localises to the secreted. Its function is as follows. Cytokine produced by activated CD4-positive helper T-cells and to a lesser extend activated CD8-positive T-cells and natural killer (NK) cells that plays pivotal roles in the immune response and tolerance. Binds to a receptor complex composed of either the high-affinity trimeric IL-2R (IL2RA/CD25, IL2RB/CD122 and IL2RG/CD132) or the low-affinity dimeric IL-2R (IL2RB and IL2RG). Interaction with the receptor leads to oligomerization and conformation changes in the IL-2R subunits resulting in downstream signaling starting with phosphorylation of JAK1 and JAK3. In turn, JAK1 and JAK3 phosphorylate the receptor to form a docking site leading to the phosphorylation of several substrates including STAT5. This process leads to activation of several pathways including STAT, phosphoinositide-3-kinase/PI3K and mitogen-activated protein kinase/MAPK pathways. Functions as a T-cell growth factor and can increase NK-cell cytolytic activity as well. Promotes strong proliferation of activated B-cells and subsequently immunoglobulin production. Plays a pivotal role in regulating the adaptive immune system by controlling the survival and proliferation of regulatory T-cells, which are required for the maintenance of immune tolerance. Moreover, participates in the differentiation and homeostasis of effector T-cell subsets, including Th1, Th2, Th17 as well as memory CD8-positive T-cells. The sequence is that of Interleukin-2 (IL2) from Delphinapterus leucas (Beluga whale).